Here is an 86-residue protein sequence, read N- to C-terminus: Large ribosomal subunit protein bL31B (86 aa).

Belongs to the bacterial ribosomal protein bL31 family. Type B subfamily. Part of the 50S ribosomal subunit.

This chain is Large ribosomal subunit protein bL31B, found in Yersinia enterocolitica serotype O:8 / biotype 1B (strain NCTC 13174 / 8081).